An 800-amino-acid chain; its full sequence is MTASGTHGGYDVLILYASDAAEWCQYLQNLFLSTRHIRKHHIQSYQLEGESAISDQELDLFNRSRSIIILLSAELVQNFYCPPVLQSLQEALWPPHKVVKLFCGVTDCDDYLTFFKDWYQWQELTYDDEPDAYLEAVKKAISEDSGCDSVTDTETEDEKTSVYSCQLAMNEEHESSKSTGEHLVVQPDHIRCGVQTTVYIIMKCRLDDKVKTEVEFSPENSSSVRVLAELENEYTISVEAPNLTSGTVPLQIYSGDLMVGETSVTYHTDMEEISSLLANAANPVQFMCQAFKIVPYSIEALDKLLTESLKKNIPASGLHLFGINQLEEDDMTTNQRDEELPTLLHFSARYGLKNLTALLLTCPGALQAYSVANKYGHYPNTIAEKHGFKDLRQFIDEYVETADMLKSHIKEELMQGEEDESVYESMAHLSTDLLMKCSLNPGSDEELYESMAGFVPGAPEDLYVEMLQSKPDTPISGDEISLTVKDSMLRKFLEGGSTDAPDSGEGVSQQYGEDLYYSVEKDTFPQEMASRPPVPVPRPESSSPQPDNELYISKVFAQKAQRPENLYVPRGKVRKETIVRPVRDLSQSSIYDPFAGMKTPGQRQLITLQEQVKMGILNVDEAVLHFKEWQLNQKKRSESFRFQQENLKRLRDSITRRQMEKQKSGKSADLEITVPIRRSHNTLGKPECGIYEYAPRKNIFPPKKELKRGDWKTESTSSTTSSASNRSSTRSILSVSSGMEGDSEDNEVSEASRSRSPIPSQAERLPLPLPERPPRVPPRGASRPVNCEGFYPPPVPPRGR.

The region spanning 8–145 (GGYDVLILYA…AVKKAISEDS (138 aa)) is the TIR domain. The interval 10–144 (YDVLILYASD…EAVKKAISED (135 aa)) is necessary and sufficient to mediate inhibition of NF-kappa-B downstream of activated TLRs. The region spanning 185–321 (VQPDHIRCGV…NIPASGLHLF (137 aa)) is the DBB domain. Y266 is subject to Phosphotyrosine. A phosphotyrosine; by SYK mark is found at Y423, Y448, and Y463. The tract at residues 527–548 (EMASRPPVPVPRPESSSPQPDN) is disordered. Positions 643–663 (QQENLKRLRDSITRRQMEKQK) form a coiled coil. Over residues 702–713 (PKKELKRGDWKT) the composition is skewed to basic and acidic residues. The interval 702 to 800 (PKKELKRGDW…YPPPVPPRGR (99 aa)) is disordered. Low complexity predominate over residues 714-737 (ESTSSTTSSASNRSSTRSILSVSS). Positions 749-759 (SEASRSRSPIP) are enriched in polar residues. 2 stretches are compositionally biased toward pro residues: residues 767–777 (LPLPERPPRVP) and 791–800 (YPPPVPPRGR).

Homooligomer. Interacts (phosphorylated on tyrosine residues within YXXM motifs) with PIK3R1 (via SH2 domain); required for BCR- and TLR-mediated activation of phosphoinositide 3-kinase. Constitutively phosphorylated. Phosphorylated on tyrosine residues within the YXXM motifs by BTK and SYK. Isoform 1 and isoform 2 are phosphorylated on tyrosine residues, most likely within the YXXM motifs, via CD19 activation.

Its subcellular location is the cytoplasm. It is found in the cell membrane. Signaling adapter that contributes to B-cell development by linking B-cell receptor (BCR) signaling to the phosphoinositide 3-kinase (PI3K)-Akt signaling pathway. Has a complementary role to the BCR coreceptor CD19, coupling BCR and PI3K activation by providing a docking site for the PI3K subunit PIK3R1. Alternatively, links Toll-like receptor (TLR) signaling to PI3K activation, a process preventing excessive inflammatory cytokine production. Also involved in the activation of PI3K in natural killer cells. May be involved in the survival of mature B-cells via activation of REL. This chain is Phosphoinositide 3-kinase adapter protein 1 (PIK3AP1), found in Gallus gallus (Chicken).